Here is a 407-residue protein sequence, read N- to C-terminus: Serine hydroxymethyltransferase (407 aa).

(6S)-5,6,7,8-tetrahydrofolate contacts are provided by residues leucine 117 and 121 to 123 (GHL). Lysine 226 is modified (N6-(pyridoxal phosphate)lysine). Glutamate 242 provides a ligand contact to (6S)-5,6,7,8-tetrahydrofolate.

It belongs to the SHMT family. Homodimer. The cofactor is pyridoxal 5'-phosphate.

The protein localises to the cytoplasm. The catalysed reaction is (6R)-5,10-methylene-5,6,7,8-tetrahydrofolate + glycine + H2O = (6S)-5,6,7,8-tetrahydrofolate + L-serine. It participates in one-carbon metabolism; tetrahydrofolate interconversion. It functions in the pathway amino-acid biosynthesis; glycine biosynthesis; glycine from L-serine: step 1/1. In terms of biological role, catalyzes the reversible interconversion of serine and glycine with tetrahydrofolate (THF) serving as the one-carbon carrier. This reaction serves as the major source of one-carbon groups required for the biosynthesis of purines, thymidylate, methionine, and other important biomolecules. Also exhibits THF-independent aldolase activity toward beta-hydroxyamino acids, producing glycine and aldehydes, via a retro-aldol mechanism. In Thermus thermophilus (strain ATCC BAA-163 / DSM 7039 / HB27), this protein is Serine hydroxymethyltransferase.